The chain runs to 232 residues: Protein FAM246A (232 aa).

Disordered regions lie at residues 1–47 (MATP…RAPG), 153–178 (LPPP…RGPT), and 191–232 (AASR…GGGD). The segment covering 19-31 (EVLRRVTGRRRDP) has biased composition (basic and acidic residues). Basic residues predominate over residues 211-220 (APVRKNHKKM).

It belongs to the FAM246 family.

The polypeptide is Protein FAM246A (Homo sapiens (Human)).